A 796-amino-acid polypeptide reads, in one-letter code: Pathogenesis-related homeodomain protein (796 aa).

Disordered regions lie at residues 34–57 (KKGKEVSNKRNSKQNKRKAEEELC) and 80–99 (VKKTRKRKSKRQQKDNKVEV). Residues 81–90 (KKTRKRKSKR) show a composition bias toward basic residues. The PHD-type zinc-finger motif lies at 190 to 247 (HIFCAECNSREAFPDNDIILCDGTCNRAFHQKCLDPPLETESIPPGDQGWFCKFCDCK). Disordered regions lie at residues 282-347 (SEAT…STGS), 393-422 (LQEQGSEDEDWGPNDRRKRKRESDAGSTLV), and 511-736 (NRKT…TEEE). Residues 292 to 303 (WPSDDSKDDDYD) are compositionally biased toward acidic residues. Residues 452-511 (GGRRRMFRLPRNAVEKLRQVFAETELPSKAVRDRLAKELSLDPEKVNKWFKNTRYMALRN) constitute a DNA-binding region (homeobox). 2 stretches are compositionally biased toward polar residues: residues 538–547 (ENNTETNEVQ) and 560–569 (ATNQNILSPC). Residues 570 to 580 (NNNQEEFQQEN) are compositionally biased toward low complexity. Polar residues predominate over residues 581 to 600 (VSFPSPTDESQQYLEQNDSS). 4 consecutive repeat copies span residues 605–631 (PHEKQSSEISLKTAVEENETESKMMKE), 632–658 (PHEELSSEMSLKTAAEEKETESKMIEE), 659–685 (PHEELSREMSLKTAVEEKETESKMMEE), and 686–712 (PHDELNSEMSLSTAVEEKETGSKMTEE). Positions 605-735 (PHEKQSSEIS…KETGRKMTEE (131 aa)) are 5 X 27 AA tandem repeats. Basic and acidic residues-rich tracts occupy residues 624 to 636 (TESKMMKEPHEEL), 645 to 690 (AAEE…HDEL), and 700 to 733 (VEEKETGSKMTEESHEELSNEMSLEEKETGRKMT). A 5; truncated repeat occupies 713–735 (SHEELSNEMSLEEKETGRKMTEE). The leucine-zipper stretch occupies residues 738 to 759 (LEAVMEMLCRTENKLLDVTQRL).

The protein belongs to the PHD-associated homeobox family.

Its subcellular location is the nucleus. In terms of biological role, specifically binds to the fungal elicitor-responsive DNA element, 5'-CTAATTGTTTA-3', of the gene PR2 promoter. The polypeptide is Pathogenesis-related homeodomain protein (PRH) (Arabidopsis thaliana (Mouse-ear cress)).